A 233-amino-acid polypeptide reads, in one-letter code: Small ribosomal subunit protein uS7m (233 aa).

The N-terminal 28 residues, 1 to 28, are a transit peptide targeting the mitochondrion; sequence MAAPTAAGLCPRLRAWLPRLTQVRWSRY.

This sequence belongs to the universal ribosomal protein uS7 family. Component of the mitochondrial ribosome small subunit (28S) which comprises a 12S rRNA and about 30 distinct proteins.

It is found in the mitochondrion. This is Small ribosomal subunit protein uS7m (MRPS7) from Gallus gallus (Chicken).